A 257-amino-acid polypeptide reads, in one-letter code: NAD-capped RNA hydrolase NudC (257 aa).

Residues lysine 25 and arginine 69 each contribute to the substrate site. Zn(2+)-binding residues include cysteine 98 and cysteine 101. Glutamate 111 lines the substrate pocket. Zn(2+) is bound by residues cysteine 116 and cysteine 119. Tyrosine 124 provides a ligand contact to substrate. Residues proline 125 to threonine 248 enclose the Nudix hydrolase domain. Residues alanine 158, glutamate 174, and glutamate 178 each contribute to the a divalent metal cation site. The Nudix box motif lies at glycine 159–glycine 180. A substrate-binding site is contributed by glutamine 192–serine 199. Glutamate 219 is an a divalent metal cation binding site. A substrate-binding site is contributed by alanine 241.

Belongs to the Nudix hydrolase family. NudC subfamily. Homodimer. Mg(2+) serves as cofactor. It depends on Mn(2+) as a cofactor. Zn(2+) is required as a cofactor.

The enzyme catalyses a 5'-end NAD(+)-phospho-ribonucleoside in mRNA + H2O = a 5'-end phospho-adenosine-phospho-ribonucleoside in mRNA + beta-nicotinamide D-ribonucleotide + 2 H(+). It carries out the reaction NAD(+) + H2O = beta-nicotinamide D-ribonucleotide + AMP + 2 H(+). The catalysed reaction is NADH + H2O = reduced beta-nicotinamide D-ribonucleotide + AMP + 2 H(+). Functionally, mRNA decapping enzyme that specifically removes the nicotinamide adenine dinucleotide (NAD) cap from a subset of mRNAs by hydrolyzing the diphosphate linkage to produce nicotinamide mononucleotide (NMN) and 5' monophosphate mRNA. The NAD-cap is present at the 5'-end of some mRNAs and stabilizes RNA against 5'-processing. Has preference for mRNAs with a 5'-end purine. Catalyzes the hydrolysis of a broad range of dinucleotide pyrophosphates. The chain is NAD-capped RNA hydrolase NudC from Escherichia coli O7:K1 (strain IAI39 / ExPEC).